The primary structure comprises 409 residues: Elongation factor Tu (409 aa).

Residues 10–214 (KPHVNIGTIG…AVDAYIPTPE (205 aa)) form the tr-type G domain. The segment at 19–26 (GHVDHGKT) is G1. 19-26 (GHVDHGKT) serves as a coordination point for GTP. Thr26 contributes to the Mg(2+) binding site. Residues 60–64 (GITIN) are G2. Positions 81-84 (DCPG) are G3. Residues 81–85 (DCPGH) and 136–139 (NKKD) each bind GTP. The interval 136-139 (NKKD) is G4. Residues 174 to 176 (SAL) form a G5 region.

It belongs to the TRAFAC class translation factor GTPase superfamily. Classic translation factor GTPase family. EF-Tu/EF-1A subfamily. In terms of assembly, monomer.

Its subcellular location is the cytoplasm. The catalysed reaction is GTP + H2O = GDP + phosphate + H(+). GTP hydrolase that promotes the GTP-dependent binding of aminoacyl-tRNA to the A-site of ribosomes during protein biosynthesis. In Gloeobacter violaceus (strain ATCC 29082 / PCC 7421), this protein is Elongation factor Tu.